Here is a 101-residue protein sequence, read N- to C-terminus: Chaperone modulatory protein CbpM (101 aa).

This sequence belongs to the CbpM family.

In terms of biological role, interacts with CbpA and inhibits both the DnaJ-like co-chaperone activity and the DNA binding activity of CbpA. Together with CbpA, modulates the activity of the DnaK chaperone system. Does not inhibit the co-chaperone activity of DnaJ. The chain is Chaperone modulatory protein CbpM from Pseudomonas putida (strain ATCC 700007 / DSM 6899 / JCM 31910 / BCRC 17059 / LMG 24140 / F1).